We begin with the raw amino-acid sequence, 118 residues long: UPF0251 protein Teth39_0655 (118 aa).

It belongs to the UPF0251 family.

In Thermoanaerobacter pseudethanolicus (strain ATCC 33223 / 39E) (Clostridium thermohydrosulfuricum), this protein is UPF0251 protein Teth39_0655.